A 432-amino-acid polypeptide reads, in one-letter code: Beta-fructosidase (432 aa).

Substrate is bound by residues 14-17 (WMND), Gln-33, Trp-41, 74-75 (FS), Tyr-92, 137-138 (RD), 188-190 (EIE), Thr-208, and Trp-260. Asp-17 is an active-site residue.

It belongs to the glycosyl hydrolase 32 family.

The catalysed reaction is Hydrolysis of terminal non-reducing beta-D-fructofuranoside residues in beta-D-fructofuranosides.. Its function is as follows. Hydrolysis of sucrose, raffinose, inulin and levan. Specific for the fructose moiety and the beta-anomeric configuration of the glycosidic linkages of its substrates. The enzyme released fructose from sucrose and raffinose, and the fructose polymer inulin is hydrolyzed quantitatively in an exo-type fashion. This chain is Beta-fructosidase (bfrA), found in Thermotoga maritima (strain ATCC 43589 / DSM 3109 / JCM 10099 / NBRC 100826 / MSB8).